The following is a 470-amino-acid chain: Tert-butanol monooxygenase / tert-amyl alcohol desaturase oxygenase subunit (470 aa).

The region spanning 51–155 (WQPVCLSQEL…AFERNGLVFA (105 aa)) is the Rieske domain. Residues cysteine 91, histidine 93, cysteine 110, and histidine 113 each coordinate [2Fe-2S] cluster.

This sequence belongs to the bacterial ring-hydroxylating dioxygenase alpha subunit family. This two-component enzyme is composed of an oxygenase (MdpJ) and a reductase (MdpK). Requires [2Fe-2S] cluster as cofactor.

The enzyme catalyses tert-butanol + NADPH + O2 + H(+) = 2-methylpropane-1,2-diol + NADP(+) + H2O. It carries out the reaction 2-methylbutan-2-ol + NADPH + O2 + H(+) = 3-hydroxy-3-methylbut-1-ene + NADP(+) + 2 H2O. Oxygenase component of a two-component system involved in the degradation of tertiary alcohols such as tert-butyl alcohol (TBA) and tert-amyl alcohol (TAA). In the presence of TBA, catalyzes the hydroxylation of TBA to 2-methylpropane-1,2-diol. In the presence of TAA, functions as a desaturase, enabling the degradation of TAA and resulting in the formation of the hemiterpene 3-hydroxy-3-methylbut-1-ene. The specificity of the catalysis depends strongly on the molecule structure of the substrate, allowing either hydroxylation or desaturation reactions. Also catalyzes the desaturation of the tertiary alcohol 3-methyl-3-pentanol (a C6 homolog of TBA and TAA) to 3-methyl-1-penten-3-ol, with lower efficiency. In addition, can transform some secondary alcohols, including the hydroxylation of 2-propanol to 1,2-propanediol, and the desaturation of 2-butanol, 3-methyl-2-butanol and 3-pentanol. The polypeptide is Tert-butanol monooxygenase / tert-amyl alcohol desaturase oxygenase subunit (Aquincola tertiaricarbonis).